The sequence spans 275 residues: NH(3)-dependent NAD(+) synthetase (275 aa).

46 to 53 is a binding site for ATP; that stretch reads GISGGQDS. Residue aspartate 52 participates in Mg(2+) binding. Arginine 140 provides a ligand contact to deamido-NAD(+). Threonine 160 lines the ATP pocket. Mg(2+) is bound at residue glutamate 165. Deamido-NAD(+) is bound by residues lysine 173 and aspartate 180. ATP-binding residues include lysine 189 and threonine 211. Deamido-NAD(+) is bound at residue 260-261; it reads HK.

Belongs to the NAD synthetase family. In terms of assembly, homodimer.

It carries out the reaction deamido-NAD(+) + NH4(+) + ATP = AMP + diphosphate + NAD(+) + H(+). It participates in cofactor biosynthesis; NAD(+) biosynthesis; NAD(+) from deamido-NAD(+) (ammonia route): step 1/1. Its function is as follows. Catalyzes the ATP-dependent amidation of deamido-NAD to form NAD. Uses ammonia as a nitrogen source. This is NH(3)-dependent NAD(+) synthetase from Escherichia coli O127:H6 (strain E2348/69 / EPEC).